The following is a 192-amino-acid chain: Xanthine phosphoribosyltransferase (192 aa).

Leu20 and Asn27 together coordinate xanthine. 128–132 lines the 5-phospho-alpha-D-ribose 1-diphosphate pocket; the sequence is AHGEA. Lys156 serves as a coordination point for xanthine.

This sequence belongs to the purine/pyrimidine phosphoribosyltransferase family. Xpt subfamily. In terms of assembly, homodimer.

It is found in the cytoplasm. It catalyses the reaction XMP + diphosphate = xanthine + 5-phospho-alpha-D-ribose 1-diphosphate. It participates in purine metabolism; XMP biosynthesis via salvage pathway; XMP from xanthine: step 1/1. Functionally, converts the preformed base xanthine, a product of nucleic acid breakdown, to xanthosine 5'-monophosphate (XMP), so it can be reused for RNA or DNA synthesis. This chain is Xanthine phosphoribosyltransferase, found in Lactobacillus acidophilus (strain ATCC 700396 / NCK56 / N2 / NCFM).